The following is a 382-amino-acid chain: Mannitol-1-phosphate 5-dehydrogenase (382 aa).

Residue 3–14 (ALHFGAGNIGRG) coordinates NAD(+). Lys269 is modified (N6-acetyllysine).

The protein belongs to the mannitol dehydrogenase family.

The catalysed reaction is D-mannitol 1-phosphate + NAD(+) = beta-D-fructose 6-phosphate + NADH + H(+). The chain is Mannitol-1-phosphate 5-dehydrogenase from Escherichia coli O127:H6 (strain E2348/69 / EPEC).